The sequence spans 1756 residues: Multifunctional conjugation protein TraI (1756 aa).

The interval 1-330 (MMSIAQVRSA…TQAIAGLSER (330 aa)) is DNA relaxase. Tyrosine 16 serves as the catalytic O-(5'-phospho-DNA)-tyrosine intermediate; for relaxase activity. Residue tyrosine 17 is the Relaxase of the active site. Residues histidine 146, histidine 157, and histidine 159 each contribute to the Mg(2+) site. The tract at residues 950-1500 (GKEAVMPLME…LRDVAAGRAV (551 aa)) is DNA helicase I. 992 to 999 (GYAGVGKT) contributes to the ATP binding site. The required for DNA transfer, may interact with TraM stretch occupies residues 1534-1756 (RNGKSAGIWL…LQKEKTLGGD (223 aa)). Residues 1717–1753 (QRVREAVREIARENLLQERLQQMERDMVRDLQKEKTL) are a coiled coil.

The protein to TraI of plasmid IncFII R100. As to quaternary structure, monomer. Part of the relaxosome, a complex composed of plasmid-encodes TraI, TraM, TraY and host-encoded IHF bound to the F plasmid origin of transfer (oriT). Directly contacts coupling protein TraD. Seems to directly contact TraM via its C-terminus. Mg(2+) is required as a cofactor.

It is found in the cytoplasm. The catalysed reaction is ATP-independent breakage of single-stranded DNA, followed by passage and rejoining.. The enzyme catalyses ATP + H2O = ADP + phosphate + H(+). With respect to regulation, nicking activity (relaxase) is inhibited by bisphosphonates such as the non-competitive inhibitor imidobisphosphate (PNP), etidronic acid (ETIDRO) and clodronic acid (CLODRO). The latter 2 are competitive inhibitors, and are already used clinically to treat bone loss (marketed as Didronel and Bonefos). All 3 compounds also inhibit conjugation and kill F plasmid-containing cells. They are specific to dual tyrosine relaxases such as those found in F and related R conjugative plasmids. Conjugative DNA transfer (CDT) is the unidirectional transfer of ssDNA plasmid from a donor to a recipient cell. It is the central mechanism by which antibiotic resistance and virulence factors are propagated in bacterial populations. Part of the relaxosome, which facilitates a site- and strand-specific cut in the origin of transfer by TraI, at the nic site. Relaxosome formation requires binding of IHF and TraY to the oriT region, which then facilitates binding of TraI relaxase. TraI forms a covalent 5'-phosphotyrosine intermediate linkage to the ssDNA. The transesterified T-strand moves from the donor cell to the recipient cell in a 5'to 3' direction, with the DNA helicase activity of TraI unwinding the DNA. DNA transfer occurs via the conjugative pore (transferosome) an intercellular junction mediated by a type IV secretion system, with TraD providing the means to link the relaxosome to the conjugative pore. The relaxase completes DNA transfer by reversing the covalent phosphotyrosine linkage and releasing the T-strand. In terms of biological role, traI has also been identified as DNA helicase I. DNA. helicase I is a potent, highly processive DNA-dependent ATPase, able to unwind about 1.1 kb dsDNA per second in a 5' to 3' manner. This chain is Multifunctional conjugation protein TraI (traI), found in Escherichia coli (strain K12).